The primary structure comprises 457 residues: Pup--protein ligase (457 aa).

Position 9 (Glu9) interacts with Mg(2+). Arg53 contacts ATP. Tyr55 is a Mg(2+) binding site. The active-site Proton acceptor is Asp57. Glu63 is a binding site for Mg(2+). ATP is bound by residues Thr66 and Trp424.

The protein belongs to the Pup ligase/Pup deamidase family. Pup-conjugating enzyme subfamily.

The catalysed reaction is ATP + [prokaryotic ubiquitin-like protein]-L-glutamate + [protein]-L-lysine = ADP + phosphate + N(6)-([prokaryotic ubiquitin-like protein]-gamma-L-glutamyl)-[protein]-L-lysine.. Its pathway is protein degradation; proteasomal Pup-dependent pathway. It participates in protein modification; protein pupylation. Catalyzes the covalent attachment of the prokaryotic ubiquitin-like protein modifier Pup to the proteasomal substrate proteins, thereby targeting them for proteasomal degradation. This tagging system is termed pupylation. The ligation reaction involves the side-chain carboxylate of the C-terminal glutamate of Pup and the side-chain amino group of a substrate lysine. The polypeptide is Pup--protein ligase (Xylanimonas cellulosilytica (strain DSM 15894 / JCM 12276 / CECT 5975 / KCTC 9989 / LMG 20990 / NBRC 107835 / XIL07)).